The chain runs to 258 residues: UBX domain-containing protein 2A (258 aa).

Residues 1–152 are required for interaction with CHRNA3; sequence MKEVDNLDSI…SATPRIVSKA (152 aa). The tract at residues 1–165 is required for inhibition of CHRNA3 ubiquitination and translocation of CHRNA3 to the plasma membrane resulting in an increase in acetylcholine-gated nicotinic acetylcholine receptor currents; the sequence is MKEVDNLDSI…EVDNKSTLSA (165 aa). Residues 61–125 enclose the SEP domain; the sequence is QVDVNIKLWK…VEDKKNEVCM (65 aa). Residues 168 to 258 form a required for interaction with VCP region; that stretch reads LNNLEPITRI…QKTAEPFRKL (91 aa). The 78-residue stretch at 170–247 folds into the UBX domain; the sequence is NLEPITRIQI…DLQNAVIIQR (78 aa).

Part of a complex composed of STUB1/CHIP, VCP/p97, CHRNA3, and UBXN2A that modulates the ubiquitination and endoplasmic reticulum-associated degradation (ERAD) of CHRNA3. Within the complex UBXN2A acts as a scaffold protein required for the interaction of CHRNA3 with VCP/p97, this interaction also inhibits CHRNA3 ubiquitination by STUB1/CHIP and subsequently ERAD. Interacts (via SEP domain) with CHRNA3 and interacts (via UBX domain) with VCP/P97; these interactions are required for the interaction of CHRNA3 with the STUB1-VCP-UBXN2A complex. Interacts with HSPA9/MOT-2 (via SBD domain); the interaction inhibits HSPA9/MOT-2 interaction with and degradation of p53, thereby promotes p53 translocation to the nucleus. Interacts with RICTOR. Ubiquitinated.

It is found in the golgi apparatus. The protein resides in the endoplasmic reticulum. Its subcellular location is the perikaryon. The protein localises to the cell projection. It localises to the dendrite. It is found in the nucleus. The protein resides in the cytoplasm. Functionally, acts to repress the ubiquitination and subsequent endoplasmic reticulum-associated degradation of CHRNA3 by the STUB1-VCP-UBXN2A complex in cortical neurons. Also acts to promote the translocation of CHRNA3 to the plasma membrane and subsequently increases plasma membrane acetylcholine-gated ion-channel activation. Plays a role in the inhibition of STUB1-mediated TP53 degradation, via its interaction with HSPA9 which acts to inhibit TP53 binding to HSPA9. Positively mediates the ubiquitination and proteosomal degradation of RICTOR, may thereby act as a negative regulator of the mTORC2 pathway. This chain is UBX domain-containing protein 2A, found in Rattus norvegicus (Rat).